We begin with the raw amino-acid sequence, 269 residues long: Major pollen allergen Pha a 1 (269 aa).

Positions 1 to 29 (MMKMVCSSSSSSLLVVAALLAVFVGSAQG) are cleaved as a signal peptide. Residue Asn38 is glycosylated (N-linked (GlcNAc...) asparagine). The Expansin-like EG45 domain occupies 67-173 (GGACGYKDVD…RRVKCKYPDG (107 aa)). Residues 187–268 (NYLALLVKYV…GWKADTHDAS (82 aa)) form the Expansin-like CBD domain.

Belongs to the expansin family. Expansin B subfamily.

The protein resides in the secreted. This Phalaris aquatica (Canary grass) protein is Major pollen allergen Pha a 1.